The chain runs to 275 residues: Exosome complex component Rrp42 (275 aa).

It belongs to the RNase PH family. Rrp42 subfamily. In terms of assembly, component of the archaeal exosome complex. Forms a hexameric ring-like arrangement composed of 3 Rrp41-Rrp42 heterodimers. The hexameric ring associates with a trimer of Rrp4 and/or Csl4 subunits.

It localises to the cytoplasm. Its function is as follows. Non-catalytic component of the exosome, which is a complex involved in RNA degradation. Contributes to the structuring of the Rrp41 active site. This Saccharolobus solfataricus (strain ATCC 35092 / DSM 1617 / JCM 11322 / P2) (Sulfolobus solfataricus) protein is Exosome complex component Rrp42.